The following is a 420-amino-acid chain: Glycogen synthase kinase-3 beta (420 aa).

The span at 1–22 (MSGRPRTTSFAESCKPVQQPSA) shows a compositional bias: polar residues. Positions 1–53 (MSGRPRTTSFAESCKPVQQPSAFGSMKVSRDKDGSKVTTVVATPGQGPDRPQE) are disordered. The residue at position 9 (Ser-9) is a Phosphoserine; by PKB/AKT1, RPS6KA3 and SGK3. Cys-14 is lipidated: S-palmitoyl cysteine. A Protein kinase domain is found at 56–340 (YTDTKVIGNG…PLEACAHSFF (285 aa)). Residues 62 to 70 (IGNGSFGVV) and Lys-85 contribute to the ATP site. Asp-181 acts as the Proton acceptor in catalysis. Phosphotyrosine is present on Tyr-216. The segment at 385–420 (QAAASPPANATAASDTNAGDRGQTNNAASASASNST) is disordered. 2 stretches are compositionally biased toward low complexity: residues 386 to 401 (AAASPPANATAASDTN) and 409 to 420 (NNAASASASNST). Ser-389 carries the post-translational modification Phosphoserine.

Belongs to the protein kinase superfamily. CMGC Ser/Thr protein kinase family. GSK-3 subfamily. As to quaternary structure, monomer. Interacts with DAB2IP (via C2 domain); the interaction stimulates GSK3B kinase activation. Interacts (via C2 domain) with PPP2CA. Interacts with CABYR, MMP2, MUC1, NIN and PRUNE1. Interacts with AXIN1; the interaction mediates hyperphosphorylation of CTNNB1 leading to its ubiquitination and destruction. Interacts with and phosphorylates SNAI1. Interacts with DNM1L (via a C-terminal domain). Interacts with ARRB2. Interacts with DISC1. Found in a complex composed of MACF1, APC, AXIN1, CTNNB1 and GSK3B. Interacts with SGK3. Interacts with the CLOCK-BMAL1 heterodimer. Interacts with ZBED3. Interacts with the BMAL1. The complex composed, at least, of APC, CTNNB1 and GSK3B interacts with JPT1; the interaction requires the inactive form of GSK3B (phosphorylated at 'Ser-9'). Forms a complex composed of PRKAR2A or PRKAR2B, GSK3B and GSKIP through GSKIP interaction; facilitates PKA-induced phosphorylation and regulates GSK3B activity. Interacts with GSKIP. Interacts with GID8. Interacts with PIWIL2. Interacts with LMBR1L. Interacts with DDX3X. Interacts with BIRC2. Interacts with TNFRSF10B; TNFRSF10B stimulation inhibits GSK3B kinase activity. Found in a complex with SLC39A6, SLC39A10 and with GSK3B that controls NCAM1 phosphorylation. Interacts with PKP3 (via ARM repeats); the interaction may be involved in PKP3 protein degradation. Phosphorylated by AKT1 and ILK1. Upon insulin-mediated signaling, the activated PKB/AKT1 protein kinase phosphorylates and deactivates GSK3B, resulting in the dephosphorylation and activation of GYS1. Activated by phosphorylation at Tyr-216. Phosphorylation of Ser-9 in the hippocampus peaks at CT0, whereas in the liver it peaks at CT12. Inactivated by phosphorylation at Ser-9. Phosphorylated in a circadian manner in the hippocampus. Post-translationally, mono-ADP-ribosylation by PARP10 negatively regulates kinase activity. In terms of processing, palmitoylated. Palmitoylation by ZDHHC4 prevents AKT1-mediated phosphorylation. In terms of tissue distribution, expressed in the liver (at protein level).

It localises to the cytoplasm. It is found in the nucleus. Its subcellular location is the cell membrane. The catalysed reaction is L-seryl-[tau protein] + ATP = O-phospho-L-seryl-[tau protein] + ADP + H(+). It carries out the reaction L-threonyl-[tau protein] + ATP = O-phospho-L-threonyl-[tau protein] + ADP + H(+). It catalyses the reaction L-seryl-[protein] + ATP = O-phospho-L-seryl-[protein] + ADP + H(+). The enzyme catalyses L-threonyl-[protein] + ATP = O-phospho-L-threonyl-[protein] + ADP + H(+). Activated by phosphorylation at Tyr-216. In response to insulin, inhibited by phosphorylation at Ser-9 by PKB/AKT1 and RPS6KA3; phosphorylation at this site causes a conformational change, preventing access of substrates to the active site. Inhibited by IL22 treatment which also triggers phosphorylation at Ser-9, promoting inactivation. Inhibited by lithium. Functionally, constitutively active protein kinase that acts as a negative regulator in the hormonal control of glucose homeostasis, Wnt signaling and regulation of transcription factors and microtubules, by phosphorylating and inactivating glycogen synthase (GYS1 or GYS2), EIF2B, CTNNB1/beta-catenin, APC, AXIN1, DPYSL2/CRMP2, JUN, NFATC1/NFATC, MAPT/TAU and MACF1. Requires primed phosphorylation of the majority of its substrates. In skeletal muscle, contributes to insulin regulation of glycogen synthesis by phosphorylating and inhibiting GYS1 activity and hence glycogen synthesis. May also mediate the development of insulin resistance by regulating activation of transcription factors. Regulates protein synthesis by controlling the activity of initiation factor 2B (EIF2BE/EIF2B5) in the same manner as glycogen synthase. In Wnt signaling, GSK3B forms a multimeric complex with APC, AXIN1 and CTNNB1/beta-catenin and phosphorylates the N-terminus of CTNNB1 leading to its degradation mediated by ubiquitin/proteasomes. Phosphorylates JUN at sites proximal to its DNA-binding domain, thereby reducing its affinity for DNA. Phosphorylates NFATC1/NFATC on conserved serine residues promoting NFATC1/NFATC nuclear export, shutting off NFATC1/NFATC gene regulation, and thereby opposing the action of calcineurin. Phosphorylates MAPT/TAU on 'Thr-548', decreasing significantly MAPT/TAU ability to bind and stabilize microtubules. MAPT/TAU is the principal component of neurofibrillary tangles in Alzheimer disease. Plays an important role in ERBB2-dependent stabilization of microtubules at the cell cortex. Phosphorylates MACF1, inhibiting its binding to microtubules which is critical for its role in bulge stem cell migration and skin wound repair. Probably regulates NF-kappa-B (NFKB1) at the transcriptional level and is required for the NF-kappa-B-mediated anti-apoptotic response to TNF-alpha (TNF/TNFA). Negatively regulates replication in pancreatic beta-cells, resulting in apoptosis, loss of beta-cells and diabetes. Through phosphorylation of the anti-apoptotic protein MCL1, may control cell apoptosis in response to growth factors deprivation. Phosphorylates MUC1 in breast cancer cells, decreasing the interaction of MUC1 with CTNNB1/beta-catenin. Is necessary for the establishment of neuronal polarity and axon outgrowth. Phosphorylates MARK2, leading to inhibition of its activity. Phosphorylates SIK1 at 'Thr-182', leading to sustainment of its activity. Phosphorylates ZC3HAV1 which enhances its antiviral activity. Phosphorylates SNAI1, leading to its ubiquitination and proteasomal degradation. Phosphorylates SFPQ at 'Thr-687' upon T-cell activation. Phosphorylates NR1D1 st 'Ser-55' and 'Ser-59' and stabilizes it by protecting it from proteasomal degradation. Regulates the circadian clock via phosphorylation of the major clock components including BMAL1, CLOCK and PER2. Phosphorylates CLOCK AT 'Ser-427' and targets it for proteasomal degradation. Phosphorylates BMAL1 at 'Ser-17' and 'Ser-21' and primes it for ubiquitination and proteasomal degradation. Phosphorylates FBXL2 at 'Thr-404' and primes it for ubiquitination by the SCF(FBXO3) complex and proteasomal degradation. Phosphorylates OGT at 'Ser-3' or 'Ser-4' which positively regulates its activity. Phosphorylates MYCN in neuroblastoma cells which may promote its degradation. Regulates the circadian rhythmicity of hippocampal long-term potentiation and BMAL1 and PER2 expression. Acts as a regulator of autophagy by mediating phosphorylation of KAT5/TIP60 under starvation conditions, activating KAT5/TIP60 acetyltransferase activity and promoting acetylation of key autophagy regulators, such as ULK1 and RUBCNL/Pacer. Negatively regulates extrinsic apoptotic signaling pathway via death domain receptors. Promotes the formation of an anti-apoptotic complex, made of DDX3X, BRIC2 and GSK3B, at death receptors, including TNFRSF10B. The anti-apoptotic function is most effective with weak apoptotic signals and can be overcome by stronger stimulation. Phosphorylates E2F1, promoting the interaction between E2F1 and USP11, stabilizing E2F1 and promoting its activity. Phosphorylates mTORC2 complex component RICTOR at 'Ser-1235' in response to endoplasmic stress, inhibiting mTORC2. Phosphorylates FXR1, promoting FXR1 ubiquitination by the SCF(FBXO4) complex and FXR1 degradation by the proteasome. Phosphorylates interleukin-22 receptor subunit IL22RA1, preventing its proteasomal degradation. In Mus musculus (Mouse), this protein is Glycogen synthase kinase-3 beta.